Here is a 535-residue protein sequence, read N- to C-terminus: CTP synthase (535 aa).

The amidoligase domain stretch occupies residues 1 to 268 (MSTKYIFVTG…DQIVCDHLKL (268 aa)). Ser-14 is a CTP binding site. Ser-14 provides a ligand contact to UTP. 15–20 (SMGKGI) contacts ATP. Tyr-55 serves as a coordination point for L-glutamine. ATP is bound at residue Asp-72. Mg(2+) contacts are provided by Asp-72 and Glu-142. Residues 149-151 (DME), 189-194 (KTKIAQ), and Lys-225 contribute to the CTP site. UTP-binding positions include 189 to 194 (KTKIAQ) and Lys-225. The 243-residue stretch at 293–535 (KIALVGKYVE…FIRVAVENSK (243 aa)) folds into the Glutamine amidotransferase type-1 domain. An L-glutamine-binding site is contributed by Gly-355. The active-site Nucleophile; for glutamine hydrolysis is the Cys-382. Residues 383–386 (LGMQ), Glu-406, and Arg-464 each bind L-glutamine. Residues His-509 and Glu-511 contribute to the active site.

It belongs to the CTP synthase family. Homotetramer.

It catalyses the reaction UTP + L-glutamine + ATP + H2O = CTP + L-glutamate + ADP + phosphate + 2 H(+). The enzyme catalyses L-glutamine + H2O = L-glutamate + NH4(+). It carries out the reaction UTP + NH4(+) + ATP = CTP + ADP + phosphate + 2 H(+). It participates in pyrimidine metabolism; CTP biosynthesis via de novo pathway; CTP from UDP: step 2/2. Its activity is regulated as follows. Allosterically activated by GTP, when glutamine is the substrate; GTP has no effect on the reaction when ammonia is the substrate. The allosteric effector GTP functions by stabilizing the protein conformation that binds the tetrahedral intermediate(s) formed during glutamine hydrolysis. Inhibited by the product CTP, via allosteric rather than competitive inhibition. In terms of biological role, catalyzes the ATP-dependent amination of UTP to CTP with either L-glutamine or ammonia as the source of nitrogen. Regulates intracellular CTP levels through interactions with the four ribonucleotide triphosphates. The sequence is that of CTP synthase from Lactococcus lactis subsp. lactis (strain IL1403) (Streptococcus lactis).